We begin with the raw amino-acid sequence, 343 residues long: MWHNQGDAMSLSMNLKLCNYHNCNCNIGEEYYNHTYPQFWNRIIEKYKLNKIISYDFTSLPYYRFVGMVGDFISKNITTGPCLLTPKEIRKLNPNIDFEEVKKMFLRHPTFEDYVSVAIETNKGYKNHIIIETYEYAKLVEYKTNIPFEEALKLTKLSAKNFKKYYKKKVKAKYYLTHKKSFDRRLRELCNEHYKYYLENANISKKGKEIIKNNPEESTWLRIKVSFLPEAINKDDSTIVEPVSSIEGMLLANKISEVSGIVVRSPPTLNLKPIMNEGNENEIFYLNNDIEKEIKKLTYRTRTKWGCSLYHNLLFLNSPICCNKNCEECLEIFINKIKILKMG.

This is an uncharacterized protein from Methanocaldococcus jannaschii (strain ATCC 43067 / DSM 2661 / JAL-1 / JCM 10045 / NBRC 100440) (Methanococcus jannaschii).